A 688-amino-acid chain; its full sequence is DNA-directed RNA polymerase subunit beta' (688 aa).

Zn(2+) is bound by residues Cys-69, Cys-71, Cys-87, and Cys-90. Mg(2+) is bound by residues Asp-489, Asp-491, and Asp-493.

This sequence belongs to the RNA polymerase beta' chain family. RpoC1 subfamily. In terms of assembly, in plastids the minimal PEP RNA polymerase catalytic core is composed of four subunits: alpha, beta, beta', and beta''. When a (nuclear-encoded) sigma factor is associated with the core the holoenzyme is formed, which can initiate transcription. The cofactor is Mg(2+). Zn(2+) is required as a cofactor.

The protein localises to the plastid. It is found in the chloroplast. It catalyses the reaction RNA(n) + a ribonucleoside 5'-triphosphate = RNA(n+1) + diphosphate. DNA-dependent RNA polymerase catalyzes the transcription of DNA into RNA using the four ribonucleoside triphosphates as substrates. The protein is DNA-directed RNA polymerase subunit beta' of Piper cenocladum (Ant piper).